Here is a 323-residue protein sequence, read N- to C-terminus: Elongation factor P--(R)-beta-lysine ligase (323 aa).

Residue 74 to 76 (SPE) participates in substrate binding. Residues 98 to 100 (RNE) and N107 contribute to the ATP site. Position 116 (Y116) interacts with substrate. Residue 242-243 (EL) coordinates ATP. E249 provides a ligand contact to substrate. G298 is a binding site for ATP.

This sequence belongs to the class-II aminoacyl-tRNA synthetase family. EpmA subfamily. Homodimer.

The catalysed reaction is D-beta-lysine + L-lysyl-[protein] + ATP = N(6)-((3R)-3,6-diaminohexanoyl)-L-lysyl-[protein] + AMP + diphosphate + H(+). In terms of biological role, with EpmB is involved in the beta-lysylation step of the post-translational modification of translation elongation factor P (EF-P). Catalyzes the ATP-dependent activation of (R)-beta-lysine produced by EpmB, forming a lysyl-adenylate, from which the beta-lysyl moiety is then transferred to the epsilon-amino group of a conserved specific lysine residue in EF-P. This chain is Elongation factor P--(R)-beta-lysine ligase, found in Vibrio campbellii (strain ATCC BAA-1116).